The chain runs to 407 residues: Arginine deiminase (407 aa).

Cys397 functions as the Amidino-cysteine intermediate in the catalytic mechanism.

It belongs to the arginine deiminase family.

It is found in the cytoplasm. It carries out the reaction L-arginine + H2O = L-citrulline + NH4(+). The protein operates within amino-acid degradation; L-arginine degradation via ADI pathway; carbamoyl phosphate from L-arginine: step 1/2. The protein is Arginine deiminase of Limosilactobacillus fermentum (strain NBRC 3956 / LMG 18251) (Lactobacillus fermentum).